The following is a 129-amino-acid chain: Putative F-box protein At3g42722 (129 aa).

Residues 4–50 (MASIDCLPDELLVGILSFILTNEAASTSILSKRWRTLFAFSHNLDCN) form the F-box domain.

This is Putative F-box protein At3g42722 from Arabidopsis thaliana (Mouse-ear cress).